The chain runs to 305 residues: Ubiquinone biosynthesis protein COQ4 homolog, mitochondrial (305 aa).

Zn(2+)-binding residues include His-150, Asp-151, His-154, and Glu-166.

It belongs to the COQ4 family. Component of a multi-subunit COQ enzyme complex. It depends on Zn(2+) as a cofactor.

It is found in the mitochondrion inner membrane. The catalysed reaction is a 4-hydroxy-3-methoxy-5-(all-trans-polyprenyl)benzoate + H(+) = a 2-methoxy-6-(all-trans-polyprenyl)phenol + CO2. It functions in the pathway cofactor biosynthesis; ubiquinone biosynthesis. In terms of biological role, lyase that catalyzes the C1-decarboxylation of 4-hydroxy-3-methoxy-5-(all-trans-polyprenyl)benzoic acid into 2-methoxy-6-(all-trans-polyprenyl)phenol during ubiquinone biosynthesis. The chain is Ubiquinone biosynthesis protein COQ4 homolog, mitochondrial from Cryptosporidium parvum (strain Iowa II).